A 274-amino-acid chain; its full sequence is MVAPTALKKATVTPVSGQDGGSSRIIGINNTESIDEDDDDDVLLDDSDNNTAKEEVEGEEGSRKTHESKTVVVDDQGKPRFTSASKTQGNKIKFESRKIMVPPHRMTPLRNSWTKIYPPLVEHLKLQVRMNLKTKSVELRTNPKFTTDPGALQKGADFIKAFTLGFDLDDSIALLRLDDLYIETFEVKDVKTLTGDHLSRAIGRIAGKDGKTKFAIENATRTRIVLADSKIHILGGFTHIRMARESVVSLILGSPPGKVYGNLRTVASRLKERY.

The disordered stretch occupies residues 1–70; that stretch reads MVAPTALKKA…GSRKTHESKT (70 aa). Residues 33–48 show a composition bias toward acidic residues; it reads SIDEDDDDDVLLDDSD. Residue serine 47 is modified to Phosphoserine. Threonine 51 carries the phosphothreonine modification. The span at 51-69 shows a compositional bias: basic and acidic residues; that stretch reads TAKEEVEGEEGSRKTHESK. Positions 195–247 constitute a KH domain; that stretch reads GDHLSRAIGRIAGKDGKTKFAIENATRTRIVLADSKIHILGGFTHIRMARESV.

It belongs to the PNO1 family. Component of the small ribosomal subunit, ribosomal RNA processing complex (SSU RRP complex). Interacts with NOB1.

The protein resides in the cytoplasm. It localises to the nucleus. Its subcellular location is the nucleolus. Its function is as follows. Required for small ribosomal subunit (SSU) synthesis. Has a role in the processing of early nucleolar and late cytoplasmic pre-RNA species. Recruits DIM1 to nucleolar pre-RNAs. Indirectly required for cleavage at the A2 site of the 20S pre-rRNA, forming 18S rRNA, and at A1 and A2 sites of other pre-rRNAs. The chain is Pre-rRNA-processing protein PNO1 (PNO1) from Saccharomyces cerevisiae (strain ATCC 204508 / S288c) (Baker's yeast).